The primary structure comprises 191 residues: Probable protein-S-isoprenylcysteine O-methyltransferase (191 aa).

3 consecutive transmembrane segments (helical) span residues 8 to 28 (WLFA…AAAF), 45 to 65 (YVLA…LFPE), and 66 to 86 (LKEY…GEVI). S-adenosyl-L-methionine is bound by residues 110–113 (HKLI), Y118, and 123–126 (HPGY). Residues 129 to 149 (FLIWAVGTQVMLCNPLSTVAF) form a helical membrane-spanning segment. R160 lines the substrate pocket. E164 is a binding site for S-adenosyl-L-methionine.

This sequence belongs to the class VI-like SAM-binding methyltransferase superfamily. Isoprenylcysteine carboxyl methyltransferase family. It depends on Zn(2+) as a cofactor.

The protein resides in the endoplasmic reticulum membrane. It carries out the reaction [protein]-C-terminal S-[(2E,6E)-farnesyl]-L-cysteine + S-adenosyl-L-methionine = [protein]-C-terminal S-[(2E,6E)-farnesyl]-L-cysteine methyl ester + S-adenosyl-L-homocysteine. Its function is as follows. Catalyzes the post-translational methylation of isoprenylated C-terminal cysteine residues. Carboxyl methylation is a reversible and potentially regulated step in the post-translational modification of prenylated proteins. This chain is Probable protein-S-isoprenylcysteine O-methyltransferase (ICMT), found in Oryza sativa subsp. indica (Rice).